A 660-amino-acid chain; its full sequence is Translation factor GUF1 homolog, mitochondrial (660 aa).

One can recognise a tr-type G domain in the interval 62–243; that stretch reads EKIRNFSIIA…TIIEKIPPPT (182 aa). GTP is bound by residues 71-78, 136-140, and 190-193; these read AHIDHGKS, DTPGH, and NKID.

It belongs to the TRAFAC class translation factor GTPase superfamily. Classic translation factor GTPase family. LepA subfamily.

The protein localises to the mitochondrion inner membrane. The enzyme catalyses GTP + H2O = GDP + phosphate + H(+). Functionally, promotes mitochondrial protein synthesis. May act as a fidelity factor of the translation reaction, by catalyzing a one-codon backward translocation of tRNAs on improperly translocated ribosomes. Binds to mitochondrial ribosomes in a GTP-dependent manner. This chain is Translation factor GUF1 homolog, mitochondrial, found in Trichoplax adhaerens (Trichoplax reptans).